The following is a 557-amino-acid chain: Putative UDP-glucuronate:xylan alpha-glucuronosyltransferase 4 (557 aa).

Residues 11–31 (KIFMIYLILVSLSLLGLILPF) form a helical; Signal-anchor for type II membrane protein membrane-spanning segment. Positions 365 and 367 each coordinate Mn(2+). Residues 365–367 (DAD), 394–396 (NSG), 421–425 (NGGDQ), and 466–471 (HYLGLK) each bind substrate. His-466 contributes to the Mn(2+) binding site.

Belongs to the glycosyltransferase 8 family. Glycogenin subfamily. It depends on Mn(2+) as a cofactor.

The protein localises to the golgi apparatus membrane. Functionally, may be involved in the substitutions of the xylan backbone in stem glucuronoxylan. In Arabidopsis thaliana (Mouse-ear cress), this protein is Putative UDP-glucuronate:xylan alpha-glucuronosyltransferase 4 (GUX4).